A 600-amino-acid polypeptide reads, in one-letter code: Malto-oligosyltrehalose trehalohydrolase (600 aa).

A disordered region spans residues 1–34 (MTQTQPVTPTPPASFQTQHDPRTRLGATPLPGGA). A substrate-binding site is contributed by 273–278 (RLDATP). D275 (nucleophile) is an active-site residue. E308 acts as the Proton donor in catalysis. Substrate-binding positions include 328–332 (DDFHH), E376, and 399–404 (HDQIGN).

Belongs to the glycosyl hydrolase 13 family. As to quaternary structure, monomer.

The protein localises to the cytoplasm. The catalysed reaction is hydrolysis of (1-&gt;4)-alpha-D-glucosidic linkage in 4-alpha-D-[(1-&gt;4)-alpha-D-glucanosyl]n trehalose to yield trehalose and (1-&gt;4)-alpha-D-glucan.. Its pathway is glycan biosynthesis; trehalose biosynthesis. The polypeptide is Malto-oligosyltrehalose trehalohydrolase (treZ) (Deinococcus radiodurans (strain ATCC 13939 / DSM 20539 / JCM 16871 / CCUG 27074 / LMG 4051 / NBRC 15346 / NCIMB 9279 / VKM B-1422 / R1)).